Here is a 362-residue protein sequence, read N- to C-terminus: Terpene synthase 3 (362 aa).

Positions 90-95 (DDFLER) match the DDxx(x)D/E motif motif. The short motif at 239–247 (NDCVSYAKE) is the NDxxSxxxD/E motif element.

Belongs to the terpene synthase family.

The catalysed reaction is (2E,6E)-farnesyl diphosphate = beta-maaliene + diphosphate. It catalyses the reaction (2E,6E)-farnesyl diphosphate = aristolene + diphosphate. It carries out the reaction (2E,6E)-farnesyl diphosphate = calarene + diphosphate. The enzyme catalyses (2E)-geranyl diphosphate = (E)-beta-ocimene + diphosphate. The catalysed reaction is (2E)-geranyl diphosphate = (Z)-beta-ocimene + diphosphate. It catalyses the reaction (2E)-geranyl diphosphate + H2O = linalool + diphosphate. It carries out the reaction (2E)-geranyl diphosphate = beta-myrcene + diphosphate. Terpene synthase that converts its substrate farnesyl diphosphate (FPP) into an unidentified sesquiterpene as a major product, as well as beta-maaliene, aristolene, calarene and 2 additional unidentified sesquiterpene as minor products. Is also able to convert geranyl diphosphate (GPP) into a mixture of monoterpenes including (Z)-beta-ocimene, (E)-beta-ocimene, allo-ocimene, linalool and beta-myrcene. The protein is Terpene synthase 3 of Dictyostelium discoideum (Social amoeba).